Reading from the N-terminus, the 251-residue chain is Hydroxyacylglutathione hydrolase (251 aa).

Residues H53, H55, D57, H58, H110, D127, and H165 each contribute to the Zn(2+) site.

The protein belongs to the metallo-beta-lactamase superfamily. Glyoxalase II family. In terms of assembly, monomer. It depends on Zn(2+) as a cofactor.

The enzyme catalyses an S-(2-hydroxyacyl)glutathione + H2O = a 2-hydroxy carboxylate + glutathione + H(+). It participates in secondary metabolite metabolism; methylglyoxal degradation; (R)-lactate from methylglyoxal: step 2/2. Functionally, thiolesterase that catalyzes the hydrolysis of S-D-lactoyl-glutathione to form glutathione and D-lactic acid. This is Hydroxyacylglutathione hydrolase from Escherichia coli O6:H1 (strain CFT073 / ATCC 700928 / UPEC).